A 225-amino-acid chain; its full sequence is Prolactin (225 aa).

Positions 1–28 (MTIQGSDRKGTLLLLVMSNLLFCQNVHP) are cleaved as a signal peptide. Cys32 and Cys37 are joined by a disulfide. Phosphoserine occurs at positions 52 and 116. Cystine bridges form between Cys84/Cys200 and Cys217/Cys225.

This sequence belongs to the somatotropin/prolactin family. Interacts with PRLR.

Its subcellular location is the secreted. Functionally, prolactin acts primarily on the mammary gland by promoting lactation. This is Prolactin (PRL) from Alexandromys montebelli (Japanese grass vole).